A 499-amino-acid polypeptide reads, in one-letter code: 6-hydroxynicotinate reductase (499 aa).

4Fe-4S ferredoxin-type domains follow at residues 1–29 (MFKI…YEKK) and 31–61 (KGAI…NDAP). Cys-9, Cys-12, Cys-15, Cys-19, Cys-41, Cys-44, Cys-47, and Cys-51 together coordinate [4Fe-4S] cluster.

As to quaternary structure, homotetramer. Requires an oxidized flavin as cofactor. [2Fe-2S] cluster is required as a cofactor. The cofactor is [4Fe-4S] cluster.

It catalyses the reaction 1,4,5,6-tetrahydro-6-oxonicotinate + oxidized 2[4Fe-4S]-[ferredoxin] = 6-hydroxynicotinate + reduced 2[4Fe-4S]-[ferredoxin] + 2 H(+). It functions in the pathway cofactor degradation; nicotinate degradation; propanoate and pyruvate from 6-hydroxynicotinate: step 1/8. Its function is as follows. Catalyzes the reversible reduction of 6-hydroxynicotinate to 6-oxo-1,4,5,6-tetrahydronicotinate. The polypeptide is 6-hydroxynicotinate reductase (Eubacterium barkeri (Clostridium barkeri)).